A 624-amino-acid chain; its full sequence is Altered inheritance of mitochondria protein 9, mitochondrial (624 aa).

The transit peptide at 1-34 (MLSRVARYSRTLNQLTRTSQGGLLSAVLRTSIRQ) directs the protein to the mitochondrion.

The protein belongs to the AIM9 family.

It localises to the mitochondrion. The protein is Altered inheritance of mitochondria protein 9, mitochondrial (AIM9) of Candida dubliniensis (strain CD36 / ATCC MYA-646 / CBS 7987 / NCPF 3949 / NRRL Y-17841) (Yeast).